We begin with the raw amino-acid sequence, 327 residues long: Phenylalanine--tRNA ligase alpha subunit (327 aa).

Residue Glu-252 coordinates Mg(2+).

Belongs to the class-II aminoacyl-tRNA synthetase family. Phe-tRNA synthetase alpha subunit type 1 subfamily. As to quaternary structure, tetramer of two alpha and two beta subunits. The cofactor is Mg(2+).

The protein localises to the cytoplasm. It carries out the reaction tRNA(Phe) + L-phenylalanine + ATP = L-phenylalanyl-tRNA(Phe) + AMP + diphosphate + H(+). The protein is Phenylalanine--tRNA ligase alpha subunit of Vibrio vulnificus (strain CMCP6).